The following is a 461-amino-acid chain: Argininosuccinate lyase (461 aa).

Belongs to the lyase 1 family. Argininosuccinate lyase subfamily.

Its subcellular location is the cytoplasm. The enzyme catalyses 2-(N(omega)-L-arginino)succinate = fumarate + L-arginine. It participates in amino-acid biosynthesis; L-arginine biosynthesis; L-arginine from L-ornithine and carbamoyl phosphate: step 3/3. In Streptococcus gordonii (strain Challis / ATCC 35105 / BCRC 15272 / CH1 / DL1 / V288), this protein is Argininosuccinate lyase.